We begin with the raw amino-acid sequence, 349 residues long: Probable trehalose-phosphate phosphatase H (349 aa).

This sequence belongs to the trehalose phosphatase family. The cofactor is a divalent metal cation.

It carries out the reaction alpha,alpha-trehalose 6-phosphate + H2O = alpha,alpha-trehalose + phosphate. It functions in the pathway glycan biosynthesis; trehalose biosynthesis. Removes the phosphate from trehalose 6-phosphate to produce free trehalose. Trehalose accumulation in plant may improve abiotic stress tolerance. This Arabidopsis thaliana (Mouse-ear cress) protein is Probable trehalose-phosphate phosphatase H (TPPH).